Reading from the N-terminus, the 107-residue chain is Integration host factor subunit beta (107 aa).

The disordered stretch occupies residues 55–107; it reads RRPARVGRNPKSGEKVQVPEKHVPHFKPGKELRERVDGRAGEPLKNDEPEDAQ. A compositionally biased stretch (basic and acidic residues) spans 65 to 101; that stretch reads KSGEKVQVPEKHVPHFKPGKELRERVDGRAGEPLKND.

The protein belongs to the bacterial histone-like protein family. As to quaternary structure, heterodimer of an alpha and a beta chain.

Functionally, this protein is one of the two subunits of integration host factor, a specific DNA-binding protein that functions in genetic recombination as well as in transcriptional and translational control. This Burkholderia pseudomallei (strain K96243) protein is Integration host factor subunit beta.